We begin with the raw amino-acid sequence, 361 residues long: 5-exo-hydroxycamphor dehydrogenase (361 aa).

Residues Cys-40, His-62, Cys-98, Cys-101, Cys-104, and Cys-170 each contribute to the Zn(2+) site.

This sequence belongs to the zinc-containing alcohol dehydrogenase family. Zn(2+) is required as a cofactor.

The enzyme catalyses (1R,4R,5R)-5-hydroxycamphor + NAD(+) = (1R,4R)-bornane-2,5-dione + NADH + H(+). It functions in the pathway terpene metabolism; (R)-camphor degradation. This Pseudomonas putida (Arthrobacter siderocapsulatus) protein is 5-exo-hydroxycamphor dehydrogenase (camD).